Reading from the N-terminus, the 485-residue chain is uncharacterized protein (485 aa).

The next 3 helical transmembrane spans lie at 284-304 (LLAL…YPLF), 328-348 (LLDL…SFIK), and 353-373 (LALT…YNCL).

Belongs to the CBF/MAK21 family.

It localises to the membrane. This is an uncharacterized protein from Schizosaccharomyces pombe (strain 972 / ATCC 24843) (Fission yeast).